The sequence spans 221 residues: Late embryogenesis abundant protein, group 3 (221 aa).

The tract at residues 1 to 221 (MASHQDKASY…KDSSTITRDH (221 aa)) is disordered. Residues 33-42 (TAQHAKDRAA) show a composition bias toward basic and acidic residues. The segment covering 43–52 (DAAGHAAGKG) has biased composition (low complexity). 2 stretches are compositionally biased toward basic and acidic residues: residues 53–63 (QDAKEATKQKA) and 72–147 (KKTD…KQKA). Over residues 212–221 (KDSSTITRDH) the composition is skewed to polar residues.

The protein belongs to the LEA type 4 family.

This chain is Late embryogenesis abundant protein, group 3 (MGL3), found in Zea mays (Maize).